Here is a 337-residue protein sequence, read N- to C-terminus: B1 bradykinin receptor (337 aa).

The Extracellular portion of the chain corresponds to 1-41 (MASEVLLELQPSNRSLQAPANITSCESALEDWDLLYRVLPG). 2 N-linked (GlcNAc...) asparagine glycosylation sites follow: Asn13 and Asn21. Residues 42–62 (FVITICFFGLLGNLLVLSFFL) form a helical membrane-spanning segment. Over 63–83 (LPWRQWWWQQRQRQQRLTIAE) the chain is Cytoplasmic. The helical transmembrane segment at 84–104 (IYLANLAASDLVFVLGLPFWA) threads the bilayer. Residues 105–121 (ENIGNRFNWPFGTDLCR) lie on the Extracellular side of the membrane. An intrachain disulfide couples Cys120 to Cys199. Residues 122-142 (VVSGVIKANLFVSIFLVVAIS) form a helical membrane-spanning segment. Topologically, residues 143–164 (QDRYRLLVYPMTSWGYRRRRQA) are cytoplasmic. The chain crosses the membrane as a helical span at residues 165–185 (QATCLLIWVAGGLLSIPTFLL). The Extracellular segment spans residues 186-217 (RSVKVVPDLNVSACILLFPHEAWHFARMVELN). The N-linked (GlcNAc...) asparagine glycan is linked to Asn195. Residues 218–238 (VLGFLLPVTAIIFFNYHILAS) traverse the membrane as a helical segment. Residues 239–261 (LRGQKEASRTRCGGPKGSKTTGL) are Cytoplasmic-facing. Residues 262–282 (ILTLVASFLVCWCPYHFFAFL) form a helical membrane-spanning segment. Residues 283–305 (DFLVQVRVIQDCSWKEITDLGLQ) lie on the Extracellular side of the membrane. A helical membrane pass occupies residues 306-326 (LANFFAFVNSCLNPLIYVFAG). Over 327–337 (RLLKTRVLGTL) the chain is Cytoplasmic.

Belongs to the G-protein coupled receptor 1 family. Bradykinin receptor subfamily. BDKRB1 sub-subfamily. Expressed in bladder, lung, duodenum, kidney, uterus, thymus, salivary gland, testis, prostate, macrophages, aorta, spleen and heart.

It is found in the cell membrane. In terms of biological role, this is a receptor for bradykinin. Could be a factor in chronic pain and inflammation. This is B1 bradykinin receptor (Bdkrb1) from Rattus norvegicus (Rat).